We begin with the raw amino-acid sequence, 377 residues long: Signal peptide peptidase (377 aa).

The disordered stretch occupies residues 1–27 (MDSALSDPHNGSAEAGGPTNSTTRPPS). Over 1–31 (MDSALSDPHNGSAEAGGPTNSTTRPPSTPEG) the chain is Lumenal. N-linked (GlcNAc...) asparagine glycans are attached at residues Asn-10 and Asn-20. Residues 32–52 (IALAYGSLLLMALLPIFFGAL) form a helical membrane-spanning segment. Residues 53–77 (RSVRCARGKNASDMPETITSRDAAR) are Cytoplasmic-facing. A helical transmembrane segment spans residues 78 to 98 (FPIIASCTLLGLYLFFKIFSQ). Topologically, residues 99–100 (EY) are lumenal. A helical membrane pass occupies residues 101–121 (INLLLSMYFFVLGILALSHTI). Residues 122–157 (SPFMNKFFPASFPNRQYQLLFTQGSGENKEEIINYE) are Cytoplasmic-facing. A helical transmembrane segment spans residues 158–178 (FDTKDLVCLGLSSIVGVWYLL). The Lumenal segment spans residues 179–181 (RKH). The chain crosses the membrane as a helical span at residues 182 to 202 (WIANNLFGLAFSLNGVELLHL). The Cytoplasmic portion of the chain corresponds to 203–209 (NNVSTGC). Residues 210–230 (ILLGGLFIYDVFWVFGTNVMV) form a helical membrane-spanning segment. The active site involves Asp-219. The Lumenal portion of the chain corresponds to 231 to 256 (TVAKSFEAPIKLVFPQDLLEKGLEAN). Residues 257 to 277 (NFAMLGLGDVVIPGIFIALLL) traverse the membrane as a helical segment. Asp-265 is an active-site residue. Over 278-290 (RFDISLKKNTHTY) the chain is Cytoplasmic. A helical transmembrane segment spans residues 291–311 (FYTSFAAYIFGLGLTIFIMHI). At 312 to 314 (FKH) the chain is on the lumenal side. The helical transmembrane segment at 315 to 335 (AQPALLYLVPACIGFPVLVAL) threads the bilayer. The PAL motif lies at 317–319 (PAL). At 336-377 (AKGEVTEMFSYEESNPKDPAAVTESKEGTEASASKGLEKKEK) the chain is on the cytoplasmic side. Residues 345 to 377 (SYEESNPKDPAAVTESKEGTEASASKGLEKKEK) are disordered. Ser-367 is subject to Phosphoserine.

The protein belongs to the peptidase A22B family. As to quaternary structure, monomer. Homodimer. Interacts with RNF139. Interacts with DERL1 and XBP1 isoform 1. Post-translationally, N-glycosylated. Widely expressed with highest levels in kidney, liver, placenta, lung, leukocytes and small intestine and reduced expression in heart and skeletal muscle. Expressed abundantly in the CNS with highest levels in thalamus and medulla.

It is found in the endoplasmic reticulum membrane. Its subcellular location is the membrane. The protein localises to the cell membrane. Functionally, catalyzes intramembrane proteolysis of signal peptides that have been removed from precursors of secretory and membrane proteins, resulting in the release of the fragment from the ER membrane into the cytoplasm. Required to generate lymphocyte cell surface (HLA-E) epitopes derived from MHC class I signal peptides. May be necessary for the removal of the signal peptide that remains attached to the hepatitis C virus core protein after the initial proteolytic processing of the polyprotein. Involved in the intramembrane cleavage of the integral membrane protein PSEN1. Cleaves the integral membrane protein XBP1 isoform 1 in a DERL1/RNF139-dependent manner. May play a role in graft rejection. This chain is Signal peptide peptidase, found in Homo sapiens (Human).